Reading from the N-terminus, the 188-residue chain is Glutathione S-transferase 2 (188 aa).

The GST N-terminal domain occupies 2–79; the sequence is VHYKLMCFDV…FLARQYGYSG (78 aa). Glutathione is bound by residues K43, 49–51, and 63–64; these read GQL and QS. Residues 81–188 enclose the GST C-terminal domain; that stretch reads TPTEEMQVDS…PHLNVFIRKL (108 aa).

This sequence belongs to the GST superfamily. Sigma family.

It carries out the reaction RX + glutathione = an S-substituted glutathione + a halide anion + H(+). In terms of biological role, conjugation of reduced glutathione to a wide number of exogenous and endogenous hydrophobic electrophiles. The sequence is that of Glutathione S-transferase 2 (gst-2) from Caenorhabditis elegans.